A 390-amino-acid polypeptide reads, in one-letter code: Serine/threonine/tyrosine-protein kinase HT1 (390 aa).

Residues 86–359 (LFIGNKFASG…GLPLTSHASL (274 aa)) enclose the Protein kinase domain. ATP contacts are provided by residues 92 to 100 (FASGAHSRI) and Lys113. The active-site Proton acceptor is the Asp212.

This sequence belongs to the protein kinase superfamily. Ser/Thr protein kinase family. Interacts with DTX56. Binds to MPK4 and MPK12. Associates to CBC1 and CBC2. In terms of processing, autophosphorylated. In terms of tissue distribution, mainly localizes in guard cells. Expressed at low level in leaves, stems, roots and flowers.

The protein localises to the cell membrane. The catalysed reaction is L-seryl-[protein] + ATP = O-phospho-L-seryl-[protein] + ADP + H(+). The enzyme catalyses L-threonyl-[protein] + ATP = O-phospho-L-threonyl-[protein] + ADP + H(+). It carries out the reaction L-tyrosyl-[protein] + ATP = O-phospho-L-tyrosyl-[protein] + ADP + H(+). Inhibited by MPK4 and MPK12. Serine/threonine/tyrosine kinase involved in the control of stomatal movement in response to CO(2). Functions as a major negative regulator of CO(2)-induced stomatal closing. Does not seem to be involved in stomatal closure in response to abscisic acid (ABA) or light. Involved in the control of red light-induced stomatal opening. Is epistatic to SRK2E/OST1 function during stomatal responses to red light and altered CO(2). Phosphorylates SRK2E/OST1 and GHR1 to prevents SRK2E/OST1- and GHR1-induced activation of SLAC1, thus preventing stomatal closure. Mediates the phosphorylation of CBC1 and CBC2. The protein is Serine/threonine/tyrosine-protein kinase HT1 of Arabidopsis thaliana (Mouse-ear cress).